A 152-amino-acid polypeptide reads, in one-letter code: Acidic phospholipase A2 (152 aa).

Positions 1–21 (MNPAHLLVLSAVCVSLLGASS) are cleaved as a signal peptide. Residues 22 to 27 (IPPQPL) constitute a propeptide that is removed on maturation. Cystine bridges form between Cys38/Cys104, Cys54/Cys151, Cys56/Cys72, Cys71/Cys132, Cys78/Cys125, Cys88/Cys118, and Cys111/Cys123. Residues Tyr55, Gly57, and Gly59 each contribute to the Ca(2+) site. His75 is a catalytic residue. Position 76 (Asp76) interacts with Ca(2+). Asp126 is a catalytic residue.

It belongs to the phospholipase A2 family. Group I subfamily. D49 sub-subfamily. Requires Ca(2+) as cofactor. Expressed by the venom gland.

The protein localises to the secreted. The catalysed reaction is a 1,2-diacyl-sn-glycero-3-phosphocholine + H2O = a 1-acyl-sn-glycero-3-phosphocholine + a fatty acid + H(+). Its function is as follows. PLA2 catalyzes the calcium-dependent hydrolysis of the 2-acyl groups in 3-sn-phosphoglycerides. This is Acidic phospholipase A2 from Ophiophagus hannah (King cobra).